The following is a 319-amino-acid chain: Methionyl-tRNA formyltransferase (319 aa).

Residue 113 to 116 coordinates (6S)-5,6,7,8-tetrahydrofolate; sequence SLLP.

This sequence belongs to the Fmt family.

The catalysed reaction is L-methionyl-tRNA(fMet) + (6R)-10-formyltetrahydrofolate = N-formyl-L-methionyl-tRNA(fMet) + (6S)-5,6,7,8-tetrahydrofolate + H(+). Functionally, attaches a formyl group to the free amino group of methionyl-tRNA(fMet). The formyl group appears to play a dual role in the initiator identity of N-formylmethionyl-tRNA by promoting its recognition by IF2 and preventing the misappropriation of this tRNA by the elongation apparatus. The protein is Methionyl-tRNA formyltransferase of Hamiltonella defensa subsp. Acyrthosiphon pisum (strain 5AT).